A 490-amino-acid chain; its full sequence is Glutamyl-tRNA(Gln) amidotransferase subunit A (490 aa).

Residues K78 and S158 each act as charge relay system in the active site. The interval 131–159 (SNETSRFGPPINPWRRKGDNAGLTPGGSS) is disordered. The active-site Acyl-ester intermediate is S182.

The protein belongs to the amidase family. GatA subfamily. Heterotrimer of A, B and C subunits.

The catalysed reaction is L-glutamyl-tRNA(Gln) + L-glutamine + ATP + H2O = L-glutaminyl-tRNA(Gln) + L-glutamate + ADP + phosphate + H(+). Its function is as follows. Allows the formation of correctly charged Gln-tRNA(Gln) through the transamidation of misacylated Glu-tRNA(Gln) in organisms which lack glutaminyl-tRNA synthetase. The reaction takes place in the presence of glutamine and ATP through an activated gamma-phospho-Glu-tRNA(Gln). The sequence is that of Glutamyl-tRNA(Gln) amidotransferase subunit A from Hyphomonas neptunium (strain ATCC 15444).